Here is a 599-residue protein sequence, read N- to C-terminus: Elongation factor 4 (599 aa).

Residues 2–184 form the tr-type G domain; that stretch reads KHIRNFSIIA…RLVRDIPPPQ (183 aa). Residues 14 to 19 and 131 to 134 each bind GTP; these read DHGKST and NKID.

It belongs to the TRAFAC class translation factor GTPase superfamily. Classic translation factor GTPase family. LepA subfamily.

Its subcellular location is the cell inner membrane. The catalysed reaction is GTP + H2O = GDP + phosphate + H(+). Required for accurate and efficient protein synthesis under certain stress conditions. May act as a fidelity factor of the translation reaction, by catalyzing a one-codon backward translocation of tRNAs on improperly translocated ribosomes. Back-translocation proceeds from a post-translocation (POST) complex to a pre-translocation (PRE) complex, thus giving elongation factor G a second chance to translocate the tRNAs correctly. Binds to ribosomes in a GTP-dependent manner. In Yersinia enterocolitica serotype O:8 / biotype 1B (strain NCTC 13174 / 8081), this protein is Elongation factor 4.